We begin with the raw amino-acid sequence, 435 residues long: Putative acid phosphatase F26C11.1 (435 aa).

Histidine 38 serves as the catalytic Nucleophile. Aspartate 317 functions as the Proton donor in the catalytic mechanism. Cysteines 382 and 388 form a disulfide.

The protein belongs to the histidine acid phosphatase family.

The enzyme catalyses a phosphate monoester + H2O = an alcohol + phosphate. This is Putative acid phosphatase F26C11.1 from Caenorhabditis elegans.